Here is a 364-residue protein sequence, read N- to C-terminus: Sulfate/thiosulfate import ATP-binding protein CysA (364 aa).

Residues 3–237 enclose the ABC transporter domain; sequence IEIARIKKSF…PATRFVLEFM (235 aa). An ATP-binding site is contributed by 35-42; it reads GPSGSGKT.

It belongs to the ABC transporter superfamily. Sulfate/tungstate importer (TC 3.A.1.6) family. In terms of assembly, the complex is composed of two ATP-binding proteins (CysA), two transmembrane proteins (CysT and CysW) and a solute-binding protein (CysP).

The protein resides in the cell inner membrane. It carries out the reaction sulfate(out) + ATP + H2O = sulfate(in) + ADP + phosphate + H(+). The catalysed reaction is thiosulfate(out) + ATP + H2O = thiosulfate(in) + ADP + phosphate + H(+). Part of the ABC transporter complex CysAWTP involved in sulfate/thiosulfate import. Responsible for energy coupling to the transport system. The sequence is that of Sulfate/thiosulfate import ATP-binding protein CysA from Salmonella typhi.